Here is a 74-residue protein sequence, read N- to C-terminus: Anaphase-promoting complex subunit 13 (74 aa).

Belongs to the APC13 family. In terms of assembly, the APC/C is composed of at least 12 subunits.

It is found in the nucleus. Its pathway is protein modification; protein ubiquitination. Functionally, component of the anaphase promoting complex/cyclosome (APC/C), a cell cycle-regulated E3 ubiquitin ligase that controls progression through mitosis and the G1 phase of the cell cycle. The APC/C complex acts by mediating ubiquitination and subsequent degradation of target proteins: it mainly mediates the formation of 'Lys-11'-linked polyubiquitin chains and, to a lower extent, the formation of 'Lys-48'- and 'Lys-63'-linked polyubiquitin chains. The APC/C complex catalyzes assembly of branched 'Lys-11'-/'Lys-48'-linked branched ubiquitin chains on target proteins. The protein is Anaphase-promoting complex subunit 13 (anapc13) of Xenopus tropicalis (Western clawed frog).